A 92-amino-acid chain; its full sequence is Small ribosomal subunit protein uS19 (92 aa).

The interval 73 to 92 (EFSPTRSFRGHAGAKNKGKK) is disordered. Over residues 80–92 (FRGHAGAKNKGKK) the composition is skewed to basic residues.

It belongs to the universal ribosomal protein uS19 family.

Functionally, protein S19 forms a complex with S13 that binds strongly to the 16S ribosomal RNA. This is Small ribosomal subunit protein uS19 from Flavobacterium psychrophilum (strain ATCC 49511 / DSM 21280 / CIP 103535 / JIP02/86).